The primary structure comprises 420 residues: D-tagatose-1,6-bisphosphate aldolase subunit GatZ (420 aa).

The protein belongs to the GatZ/KbaZ family. GatZ subfamily. In terms of assembly, forms a complex with GatY.

The protein operates within carbohydrate metabolism; D-tagatose 6-phosphate degradation; D-glyceraldehyde 3-phosphate and glycerone phosphate from D-tagatose 6-phosphate: step 2/2. In terms of biological role, component of the tagatose-1,6-bisphosphate aldolase GatYZ that is required for full activity and stability of the Y subunit. Could have a chaperone-like function for the proper and stable folding of GatY. When expressed alone, GatZ does not show any aldolase activity. Is involved in the catabolism of galactitol. In Escherichia coli (strain SMS-3-5 / SECEC), this protein is D-tagatose-1,6-bisphosphate aldolase subunit GatZ.